Consider the following 232-residue polypeptide: MFGVLNSNDHRAAVQQRNIPAFGRTSFEPWTDNPTSNYRCETGGNGRDSGQNRVRRPMNAFMVWSRDQRRKVALENPQMQNSEISKQLGYQWRMLTEAEKWPFFEEAQRLQAMHREKYPDYKYRPRRKALPQKSDKLLPAASSSMLCRQVLVDEKWYPFTYRDSCSRAAHSPMEDQLSSSRPVNIANSLLQQEHHYRSTSLGDSPETLAAHLSADPPFYPKEQLGLSDAYFP.

The disordered stretch occupies residues R24–R53. The segment at residues V54–K122 is a DNA-binding region (HMG box). The tract at residues Y196–D215 is disordered.

The protein belongs to the SRY family. As to quaternary structure, interacts with CALM, EP300, HDAC3, KPNB1, ZNF208 isoform KRAB-O, PARP1, SLC9A3R2 and WT1. The interaction with EP300 modulates its DNA-binding activity. The interaction with KPNB1 is sensitive to dissociation by Ran in the GTP-bound form. Interaction with PARP1 impaired its DNA-binding activity.

It localises to the nucleus speckle. Its subcellular location is the cytoplasm. It is found in the nucleus. Its function is as follows. Transcriptional regulator that controls a genetic switch in male development. It is necessary and sufficient for initiating male sex determination by directing the development of supporting cell precursors (pre-Sertoli cells) as Sertoli rather than granulosa cells. Involved in different aspects of gene regulation including promoter activation or repression. Binds to the DNA consensus sequence 5'-[AT]AACAA[AT]-3'. SRY HMG box recognizes DNA by partial intercalation in the minor groove and promotes DNA bending. Also involved in pre-mRNA splicing. In male adult brain involved in the maintenance of motor functions of dopaminergic neurons. The polypeptide is Sex-determining region Y protein (SRY) (Pusa caspica (Caspian seal)).